The primary structure comprises 214 residues: Octanoyltransferase (214 aa).

The 179-residue stretch at 36–214 folds into the BPL/LPL catalytic domain; that stretch reads GRESEMVWLL…QQKFDTIFLQ (179 aa). Residues 75 to 82, 147 to 149, and 160 to 162 each bind substrate; these read RGGKYSYH, AFG, and GFS. Residue Cys178 is the Acyl-thioester intermediate of the active site.

The protein belongs to the LipB family.

It is found in the cytoplasm. It carries out the reaction octanoyl-[ACP] + L-lysyl-[protein] = N(6)-octanoyl-L-lysyl-[protein] + holo-[ACP] + H(+). It participates in protein modification; protein lipoylation via endogenous pathway; protein N(6)-(lipoyl)lysine from octanoyl-[acyl-carrier-protein]: step 1/2. In terms of biological role, catalyzes the transfer of endogenously produced octanoic acid from octanoyl-acyl-carrier-protein onto the lipoyl domains of lipoate-dependent enzymes. Lipoyl-ACP can also act as a substrate although octanoyl-ACP is likely to be the physiological substrate. In Anaplasma marginale (strain Florida), this protein is Octanoyltransferase.